Reading from the N-terminus, the 733-residue chain is Cyclic nucleotide-gated channel (733 aa).

2 disordered regions span residues 1–33 and 67–95; these read MSTA…PTAS and PNGN…IEVP. Residues 1-125 lie on the Cytoplasmic side of the membrane; sequence MSTAEPAPDP…PSTDNFYYWT (125 aa). Residues 12–25 are compositionally biased toward polar residues; it reads NPSTSGLAPTTNGI. A helical membrane pass occupies residues 126-148; sequence CVVTVAYIYNLLFVIARQVFNDL. Residues 149–197 lie on the Extracellular side of the membrane; the sequence is IGPSSQSLCRFYNGTLNSTTQVECTYNMLTNMKEMPTYSQYPDLGWSKY. A helical membrane pass occupies residues 198 to 217; that stretch reads WHFRMLWVFFDLLMDCVYLI. The Cytoplasmic segment spans residues 218 to 251; the sequence is DTFLNYRMGYMDQGLVVREAEKVTKAYWQSKQYR. The chain crosses the membrane as a helical span at residues 252-265; sequence IDGISLIPLDYILG. The Extracellular portion of the chain corresponds to 266–276; sequence WPIPYINWRGL. A helical membrane pass occupies residues 277 to 287; the sequence is PILRLNRLIRY. Over 288–308 the chain is Cytoplasmic; that stretch reads KRVRNCLERTETRSSMPNAFR. Residues 309 to 331 form a helical membrane-spanning segment; sequence VVVVVWYIVIIIHWNACLYFWIS. Over 332–362 the chain is Extracellular; it reads EWIGLGTDAWVYGHLNKQSLPDDITDTLLRR. Helical transmembrane passes span 363-385 and 386-411; these read YVYS…SPVR and NIEY…GNVG. The interval 376–379 is selectivity filter; it reads TIGE. Glu379 is a binding site for Na(+). At 412-733 the chain is on the cytoplasmic side; the sequence is SMISNMSAAR…TGTESESLLK (322 aa). Residues 419 to 496 are C-linker; it reads AARTEFQNKM…TLRKVRIFQD (78 aa). The interval 493 to 607 is cyclic nucleotide-binding domain; the sequence is IFQDCEAGLL…ALREYPDARK (115 aa). Residue Gly559 coordinates 3',5'-cyclic GMP. Position 560 (Glu560) interacts with 3',5'-cyclic AMP. 5 residues coordinate 3',5'-cyclic GMP: Ser562, Arg575, Thr576, Lys619, and Asp620. Arg575 is a binding site for 3',5'-cyclic AMP. The tract at residues 694–733 is disordered; sequence SIDGGDISTDGVDERVRPPRLRQTKTIDLPTGTESESLLK.

The protein belongs to the cyclic nucleotide-gated cation channel (TC 1.A.1.5) family. Homotetramer. As to expression, expressed at the sensory endings of thermosensory, gustatory, and olfactory neurons.

The protein resides in the cell membrane. The protein localises to the cell projection. It localises to the cilium. It carries out the reaction Ca(2+)(in) = Ca(2+)(out). It catalyses the reaction Na(+)(in) = Na(+)(out). The catalysed reaction is K(+)(in) = K(+)(out). Pore-forming subunit of the cyclic nucleotide-gated channel. Required for normal thermosensation and chemosensation sensory behavior. Required, downstream of receptor-type guanylate cyclase gcy-9, for CO2-mediated responses in BAG neurons. Required, downstream of receptor-type guanylate cyclase gcy-14, for alkaline pH-mediated responses in ASE-left (ASEL) neurons. Involved in the development of ASJ sensory neuron axon during late larval stages and in the maintenance of normal axon morphology in the adult. Regulates dauer formation. Required for the calcium flux to the cytoplasm in the ASJ sensory neurons upon the onset and removal of a nitric oxide (NO) stimulus, thereby promoting the ASJ-mediated behavioral avoidance response to NO-producing organisms like P.aeruginosa. In ASI and ASJ sensory neurons, controls behavioral response to P.aeruginosa by up-regulating the transcription of daf-7, a member of the TGF-beta family. In AWB and AWC sensory neurons, mediates the recognition of food odors which subsequently allows for the detection of preferred food sources. In AWC neurons, acts to promote expression of srsx-3, a member of the GPCR family. Binding to cGMP results in conformational changes at the hydrophobic gate that converts the protein from an inactive closed state to an active open state. This chain is Cyclic nucleotide-gated channel (tax-4), found in Caenorhabditis elegans.